Here is a 569-residue protein sequence, read N- to C-terminus: Urease subunit alpha (569 aa).

The Urease domain maps to 131-569; that stretch reads GGIDAHIHFI…VPMAQRYFLF (439 aa). Ni(2+) contacts are provided by H136, H138, and K219. K219 is subject to N6-carboxylysine. H221 contacts substrate. Residues H248 and H274 each contribute to the Ni(2+) site. The active-site Proton donor is the H322. Residue D362 coordinates Ni(2+).

The protein belongs to the metallo-dependent hydrolases superfamily. Urease alpha subunit family. In terms of assembly, heterotrimer of UreA (gamma), UreB (beta) and UreC (alpha) subunits. Three heterotrimers associate to form the active enzyme. Ni cation serves as cofactor. Post-translationally, carboxylation allows a single lysine to coordinate two nickel ions.

The protein resides in the cytoplasm. It catalyses the reaction urea + 2 H2O + H(+) = hydrogencarbonate + 2 NH4(+). It functions in the pathway nitrogen metabolism; urea degradation; CO(2) and NH(3) from urea (urease route): step 1/1. This is Urease subunit alpha from Bacillus sp. (strain TB-90).